A 470-amino-acid polypeptide reads, in one-letter code: ATP synthase subunit beta (470 aa).

155 to 162 (GGAGVGKT) serves as a coordination point for ATP.

This sequence belongs to the ATPase alpha/beta chains family. In terms of assembly, F-type ATPases have 2 components, CF(1) - the catalytic core - and CF(0) - the membrane proton channel. CF(1) has five subunits: alpha(3), beta(3), gamma(1), delta(1), epsilon(1). CF(0) has three main subunits: a(1), b(2) and c(9-12). The alpha and beta chains form an alternating ring which encloses part of the gamma chain. CF(1) is attached to CF(0) by a central stalk formed by the gamma and epsilon chains, while a peripheral stalk is formed by the delta and b chains.

The protein resides in the cell membrane. The enzyme catalyses ATP + H2O + 4 H(+)(in) = ADP + phosphate + 5 H(+)(out). In terms of biological role, produces ATP from ADP in the presence of a proton gradient across the membrane. The catalytic sites are hosted primarily by the beta subunits. The protein is ATP synthase subunit beta of Staphylococcus haemolyticus (strain JCSC1435).